A 68-amino-acid polypeptide reads, in one-letter code: uncharacterized protein (68 aa).

2 helical membrane-spanning segments follow: residues Met-1 to Pro-21 and Val-28 to Val-48.

It localises to the cell membrane. This is an uncharacterized protein from Haemophilus influenzae (strain ATCC 51907 / DSM 11121 / KW20 / Rd).